Here is a 323-residue protein sequence, read N- to C-terminus: Beta-ketoacyl-[acyl-carrier-protein] synthase III (323 aa).

Residues C113 and H250 contribute to the active site. The interval 251–255 is ACP-binding; that stretch reads QANKR. N280 is an active-site residue.

This sequence belongs to the thiolase-like superfamily. FabH family. Homodimer.

The protein localises to the cytoplasm. It carries out the reaction malonyl-[ACP] + acetyl-CoA + H(+) = 3-oxobutanoyl-[ACP] + CO2 + CoA. Its pathway is lipid metabolism; fatty acid biosynthesis. In terms of biological role, catalyzes the condensation reaction of fatty acid synthesis by the addition to an acyl acceptor of two carbons from malonyl-ACP. Catalyzes the first condensation reaction which initiates fatty acid synthesis and may therefore play a role in governing the total rate of fatty acid production. Possesses both acetoacetyl-ACP synthase and acetyl transacylase activities. Its substrate specificity determines the biosynthesis of branched-chain and/or straight-chain of fatty acids. The polypeptide is Beta-ketoacyl-[acyl-carrier-protein] synthase III (Agrobacterium fabrum (strain C58 / ATCC 33970) (Agrobacterium tumefaciens (strain C58))).